A 2386-amino-acid polypeptide reads, in one-letter code: Protein kinase rad3 (2386 aa).

The region spanning 1386-1943 (TLGIVSLNCG…LWQLMATIKS (558 aa)) is the FAT domain. In terms of domain architecture, PI3K/PI4K catalytic spans 2052–2370 (FEDEVDIMNS…QIQELIKSAV (319 aa)). Residues 2058–2064 (IMNSLQK) form a G-loop region. A catalytic loop region spans residues 2227–2235 (GLGDRHGEN). Residues 2247–2271 (HVDFNCLFDKGLTFEKPEKVPFRLT) are activation loop. The FATC domain occupies 2354 to 2386 (IPLSIEGQIQELIKSAVNPKNLVEMYIGWAAYF).

Belongs to the PI3/PI4-kinase family. ATM subfamily. In terms of assembly, interacts with crb2 (via BRCT domain). Interacts with chk1.

It localises to the nucleus. The catalysed reaction is L-seryl-[protein] + ATP = O-phospho-L-seryl-[protein] + ADP + H(+). It carries out the reaction L-threonyl-[protein] + ATP = O-phospho-L-threonyl-[protein] + ADP + H(+). Its function is as follows. Serine/threonine kinase which activates checkpoint signaling upon genotoxic stresses. Involved in G2 arrest following DNA damage where it phosphorylates chk1. Phosphorylation of 'Thr-73' and 'Ser-80' of checkpoint mediator crb2 promotes its interaction with chk1. It is also involved in the dependence of mitosis on the completion of DNA replication. This chain is Protein kinase rad3 (rad3), found in Schizosaccharomyces pombe (strain 972 / ATCC 24843) (Fission yeast).